The sequence spans 669 residues: DNA ligase (669 aa).

NAD(+) is bound by residues 34-38 (DAEYD), 83-84 (SL), and Glu-114. The active-site N6-AMP-lysine intermediate is the Lys-116. NAD(+) contacts are provided by Arg-137, Glu-171, Lys-287, and Lys-311. Zn(2+) is bound by residues Cys-405, Cys-408, Cys-423, and Cys-428. The region spanning 591-669 (NVESYFAGKT…EERFLQELNK (79 aa)) is the BRCT domain.

It belongs to the NAD-dependent DNA ligase family. LigA subfamily. Requires Mg(2+) as cofactor. It depends on Mn(2+) as a cofactor.

The catalysed reaction is NAD(+) + (deoxyribonucleotide)n-3'-hydroxyl + 5'-phospho-(deoxyribonucleotide)m = (deoxyribonucleotide)n+m + AMP + beta-nicotinamide D-nucleotide.. In terms of biological role, DNA ligase that catalyzes the formation of phosphodiester linkages between 5'-phosphoryl and 3'-hydroxyl groups in double-stranded DNA using NAD as a coenzyme and as the energy source for the reaction. It is essential for DNA replication and repair of damaged DNA. The protein is DNA ligase of Bacillus cereus (strain ATCC 14579 / DSM 31 / CCUG 7414 / JCM 2152 / NBRC 15305 / NCIMB 9373 / NCTC 2599 / NRRL B-3711).